The primary structure comprises 390 residues: GTPase Obg (390 aa).

The Obg domain maps to 1-159 (MKFVDEASIL…RELLLELMLL (159 aa)). A disordered region spans residues 127 to 147 (NTRFKSSVNRTPRQKTNGTPG). Residues 129–145 (RFKSSVNRTPRQKTNGT) are compositionally biased toward polar residues. The region spanning 160 to 333 (ADVGMLGMPN…LCWDVMTFII (174 aa)) is the OBG-type G domain. GTP is bound by residues 166–173 (GMPNAGKS), 191–195 (FTTLV), 213–216 (DIPG), 283–286 (NKID), and 314–316 (SAA). Mg(2+) is bound by residues S173 and T193.

This sequence belongs to the TRAFAC class OBG-HflX-like GTPase superfamily. OBG GTPase family. In terms of assembly, monomer. Mg(2+) is required as a cofactor.

It localises to the cytoplasm. An essential GTPase which binds GTP, GDP and possibly (p)ppGpp with moderate affinity, with high nucleotide exchange rates and a fairly low GTP hydrolysis rate. Plays a role in control of the cell cycle, stress response, ribosome biogenesis and in those bacteria that undergo differentiation, in morphogenesis control. In Escherichia coli O7:K1 (strain IAI39 / ExPEC), this protein is GTPase Obg.